A 344-amino-acid polypeptide reads, in one-letter code: L-erythro-3,5-diaminohexanoate dehydrogenase (344 aa).

This sequence belongs to the KDD family. Homodimer.

The catalysed reaction is (3S,5S)-3,5-diaminohexanoate + NAD(+) + H2O = (5S)-5-amino-3-oxohexanoate + NH4(+) + NADH + H(+). Its pathway is amino-acid degradation; L-lysine degradation via acetate pathway. Involved in the anaerobic fermentation of lysine. Catalyzes the oxidative deamination of L-erythro-3,5-diaminohexanoate (3,5-DAH) to 3-keto-5-aminohexanoate (KAH). In Acetoanaerobium sticklandii (strain ATCC 12662 / DSM 519 / JCM 1433 / CCUG 9281 / NCIMB 10654 / HF) (Clostridium sticklandii), this protein is L-erythro-3,5-diaminohexanoate dehydrogenase.